The primary structure comprises 186 residues: Putative CTD phosphatase-like protein 355R (186 aa).

The FCP1 homology domain occupies 2–182 (ENNKKKLILL…TELLKVQKTL (181 aa)).

It belongs to the IIV-6 355R family.

May function as a phosphatase. This Aedes vexans (Inland floodwater mosquito) protein is Putative CTD phosphatase-like protein 355R.